Here is a 311-residue protein sequence, read N- to C-terminus: Ribosomal RNA small subunit methyltransferase H (311 aa).

S-adenosyl-L-methionine is bound by residues 34–36 (GGY), Asp51, Phe75, Asp93, and Gln100.

Belongs to the methyltransferase superfamily. RsmH family.

The protein resides in the cytoplasm. The enzyme catalyses cytidine(1402) in 16S rRNA + S-adenosyl-L-methionine = N(4)-methylcytidine(1402) in 16S rRNA + S-adenosyl-L-homocysteine + H(+). Functionally, specifically methylates the N4 position of cytidine in position 1402 (C1402) of 16S rRNA. The sequence is that of Ribosomal RNA small subunit methyltransferase H from Caulobacter vibrioides (strain ATCC 19089 / CIP 103742 / CB 15) (Caulobacter crescentus).